A 437-amino-acid polypeptide reads, in one-letter code: tRNA-2-methylthio-N(6)-dimethylallyladenosine synthase (437 aa).

The region spanning 2–117 (KHLYIKTFGC…LPQMIQRALD (116 aa)) is the MTTase N-terminal domain. 6 residues coordinate [4Fe-4S] cluster: C11, C48, C80, C154, C158, and C161. The region spanning 140–372 (RAQGVVGQVT…QQLLNTQQLQ (233 aa)) is the Radical SAM core domain. Positions 375 to 437 (KARVGRRESV…LPNSLRGRLV (63 aa)) constitute a TRAM domain.

This sequence belongs to the methylthiotransferase family. MiaB subfamily. As to quaternary structure, monomer. [4Fe-4S] cluster serves as cofactor.

Its subcellular location is the cytoplasm. It catalyses the reaction N(6)-dimethylallyladenosine(37) in tRNA + (sulfur carrier)-SH + AH2 + 2 S-adenosyl-L-methionine = 2-methylsulfanyl-N(6)-dimethylallyladenosine(37) in tRNA + (sulfur carrier)-H + 5'-deoxyadenosine + L-methionine + A + S-adenosyl-L-homocysteine + 2 H(+). In terms of biological role, catalyzes the methylthiolation of N6-(dimethylallyl)adenosine (i(6)A), leading to the formation of 2-methylthio-N6-(dimethylallyl)adenosine (ms(2)i(6)A) at position 37 in tRNAs that read codons beginning with uridine. The chain is tRNA-2-methylthio-N(6)-dimethylallyladenosine synthase from Magnetococcus marinus (strain ATCC BAA-1437 / JCM 17883 / MC-1).